The following is a 353-amino-acid chain: Guanine nucleotide-binding protein subunit alpha (353 aa).

Residues 1–26 (MGCGMSTEEKEGKARNEEIENQLKRD) form a disordered region. Residue Gly2 is the site of N-myristoyl glycine attachment. Cys3 carries S-palmitoyl cysteine lipidation. The segment covering 7-26 (TEEKEGKARNEEIENQLKRD) has biased composition (basic and acidic residues). Residues 32–353 (NEIKMLLLGA…QENLRLCGLI (322 aa)) enclose the G-alpha domain. The segment at 35-48 (KMLLLGAGESGKST) is G1 motif. GTP-binding residues include Glu43, Ser44, Gly45, Lys46, Ser47, Thr48, Asp150, Leu175, Thr181, Gly203, Asn269, Lys270, Asp272, and Ala325. A Mg(2+)-binding site is contributed by Ser47. Residues 173–181 (DVLRSRVKT) are G2 motif. Residue Thr181 participates in Mg(2+) binding. Positions 196-205 (YRMFDVGGQR) are G3 motif. Positions 265-272 (ILFLNKID) are G4 motif. The G5 motif stretch occupies residues 323–328 (TCATDT).

The protein belongs to the G-alpha family. G(q) subfamily. As to quaternary structure, g proteins are composed of 3 units; alpha, beta and gamma. The alpha chain contains the guanine nucleotide binding site. Requires Mg(2+) as cofactor.

Its function is as follows. Guanine nucleotide-binding proteins (G proteins) are involved as modulators or transducers in various transmembrane signaling systems. The polypeptide is Guanine nucleotide-binding protein subunit alpha (Cryphonectria parasitica (Chestnut blight fungus)).